A 380-amino-acid polypeptide reads, in one-letter code: 3-dehydroquinate synthase (380 aa).

NAD(+)-binding positions include 118–122 (GVIGD), 142–143 (TS), K155, and K164. Zn(2+) contacts are provided by E197, H259, and H278.

The protein belongs to the sugar phosphate cyclases superfamily. Dehydroquinate synthase family. Requires Co(2+) as cofactor. Zn(2+) is required as a cofactor. It depends on NAD(+) as a cofactor.

The protein localises to the cytoplasm. The catalysed reaction is 7-phospho-2-dehydro-3-deoxy-D-arabino-heptonate = 3-dehydroquinate + phosphate. Its pathway is metabolic intermediate biosynthesis; chorismate biosynthesis; chorismate from D-erythrose 4-phosphate and phosphoenolpyruvate: step 2/7. In terms of biological role, catalyzes the conversion of 3-deoxy-D-arabino-heptulosonate 7-phosphate (DAHP) to dehydroquinate (DHQ). This is 3-dehydroquinate synthase from Sinorhizobium medicae (strain WSM419) (Ensifer medicae).